A 342-amino-acid polypeptide reads, in one-letter code: Gibberellin cluster GA4 desaturase (342 aa).

Positions 127-183 (PELAPPYPMPGKSSSGSKEREAIPANELPTTRAKGFQKGEEEGPVRKPHKDWGPSGA) are disordered.

Belongs to the asaB hydroxylase/desaturase family.

Its pathway is plant hormone biosynthesis; gibberellin biosynthesis. In terms of biological role, GA4 desaturase; part of the gene cluster that mediates the biosynthesis of gibberellins (GAs), diterpenoids that may provide a selective advantage during infection of the preferred host plant, rice. Gibberellins (GAs) are diterpenoids and are synthesized via the mevalonate pathway. Biosynthesis of the major metabolite GA3 (gibberellic acid) from geranylgeranyl diphosphate (GGPP) requires 13 steps. The GGPP produced by the geranylgeranyl diphosphate synthase GGS2 is converted to ent-kaurene via ent-copalyldiphosphate in a two-step cyclization reaction performed by the bifunctional ent-copalyl diphosphate synthase/ent-kaurene synthase enzyme (CPS/KS). Ent-Kaurene is metabolized to GAs by a series of oxidation reactions catalyzed by cytochrome P450 monooxygenases. Cytochrome P450 monooxygenase P450-4 is an ent-kaurene oxidase that catalyzes the three oxidation steps between ent-kaurene and ent-kaurenoic acid. The highly multifunctional cytochrome P450 monooxygenase P450-1 then catalyzes four steps involving oxidation at two carbon atoms, in the main pathway from ent-kaurenoic acid to GA14 via GA12-aldehyde as well as producing kaurenolides and fujenoic acids as by-products. The cytochrome P450 monooxygenase P450-2 then converts GA14 to GA4 by removal of C-20. GA4 is further converted to GA7 by the GA4 desaturase DES via 1,2-desaturation before cytochrome P450 monooxygenase P450-3, a 13-hydroxylase, hydroxylates GA7 to GA3, the final product of the GA-biosynthetic pathway. The chain is Gibberellin cluster GA4 desaturase from Gibberella fujikuroi (strain CBS 195.34 / IMI 58289 / NRRL A-6831) (Bakanae and foot rot disease fungus).